We begin with the raw amino-acid sequence, 2101 residues long: General transcription factor 3C polypeptide 1 (2101 aa).

Positions 473 to 487 are enriched in acidic residues; it reads GEEAFLSDSESEEES. 2 disordered regions span residues 473–574 and 588–609; these read GEEA…MDSH and NPKE…DKPH. The span at 492 to 503 shows a compositional bias: basic residues; sequence GKRRGRGSRGHA. The span at 504-513 shows a compositional bias: low complexity; sequence RASGDAGSGS. Lys-534 is covalently cross-linked (Glycyl lysine isopeptide (Lys-Gly) (interchain with G-Cter in SUMO2)). Ser-667 is subject to Phosphoserine. Disordered regions lie at residues 718–772 and 820–864; these read STAN…EKMG and GEQP…SSWE. A compositionally biased stretch (polar residues) spans 747-759; sequence RSANSDPNTSSKP. Basic and acidic residues-rich tracts occupy residues 760–771 and 826–836; these read ESTRVKKTDEKM and HSERKTGKQES. Residues Lys-770 and Lys-833 each participate in a glycyl lysine isopeptide (Lys-Gly) (interchain with G-Cter in SUMO2) cross-link. Ser-1063 carries the phosphoserine modification. Residues 1186–1196 show a composition bias toward basic and acidic residues; it reads EEQFELDREPT. Disordered regions lie at residues 1186-1239, 1598-1627, and 1822-1923; these read EEQF…KKLR, KSLG…QGVE, and DTKA…QENQ. Thr-1196 is modified (phosphothreonine). The segment covering 1199-1215 has biased composition (basic residues); the sequence is RNRKVRGGKSQKRKRLK. Residues 1229 to 1239 are compositionally biased toward basic and acidic residues; it reads EHPEAKSKKLR. Acidic residues predominate over residues 1606–1617; sequence LDDDEEEEDLDE. Residues 1822-1831 are compositionally biased toward basic and acidic residues; it reads DTKASGDDSQ. Phosphoserine is present on residues Ser-1854 and Ser-1890. The span at 1900–1910 shows a compositional bias: low complexity; sequence EAQAPAQLAAP.

Belongs to the TFIIIC subunit 1 family. In terms of assembly, part of the TFIIIC subcomplex TFIIIC2, consisting of six subunits, GTF3C1, GTF3C2, GTF3C3, GTF3C4, GTF3C5 and GTF3C6. Interacts with IGHMBP2. Interacts with MAF1.

The protein resides in the nucleus. Its function is as follows. Required for RNA polymerase III-mediated transcription. Component of TFIIIC that initiates transcription complex assembly on tRNA and is required for transcription of 5S rRNA and other stable nuclear and cytoplasmic RNAs. Binds to the box B promoter element. The sequence is that of General transcription factor 3C polypeptide 1 (Gtf3c1) from Mus musculus (Mouse).